We begin with the raw amino-acid sequence, 247 residues long: MSKLFWAMLAFISRLPVPSRWSQGLDFEQYSRGIVMFPFIGLILGGVSGLIFILLQPWCGIPLAALFCILALALLTGGFHLDGLADTCDGIFSARRRERMLEIMRDSRLGTHGGLALIFVLLAKILVVSELALRGTPMLAALAAACAAGRGSAVLLMYRHRYAREEGLGNVFIGKVSGRQTCITLGLAIIIATVLLPGMQGLAAMVVTCAAIFILGQLLKRTLGGQTGDTLGAAIELGELIFLLALL.

The next 6 helical transmembrane spans lie at 34–54, 59–79, 113–133, 138–158, 171–193, and 197–219; these read IVMF…IFIL, CGIP…TGGF, GGLA…ELAL, MLAA…LLMY, VFIG…IIAT, and PGMQ…GQLL.

This sequence belongs to the CobS family. Mg(2+) serves as cofactor.

The protein localises to the cell inner membrane. It catalyses the reaction alpha-ribazole + adenosylcob(III)inamide-GDP = adenosylcob(III)alamin + GMP + H(+). It carries out the reaction alpha-ribazole 5'-phosphate + adenosylcob(III)inamide-GDP = adenosylcob(III)alamin 5'-phosphate + GMP + H(+). It participates in cofactor biosynthesis; adenosylcobalamin biosynthesis; adenosylcobalamin from cob(II)yrinate a,c-diamide: step 7/7. Functionally, joins adenosylcobinamide-GDP and alpha-ribazole to generate adenosylcobalamin (Ado-cobalamin). Also synthesizes adenosylcobalamin 5'-phosphate from adenosylcobinamide-GDP and alpha-ribazole 5'-phosphate. This chain is Adenosylcobinamide-GDP ribazoletransferase, found in Salmonella newport (strain SL254).